The primary structure comprises 430 residues: Tol-Pal system protein TolB (430 aa).

The N-terminal stretch at 1-26 (MSLMTKLGLRALVASCLIAAGGAAHA) is a signal peptide.

Belongs to the TolB family. In terms of assembly, the Tol-Pal system is composed of five core proteins: the inner membrane proteins TolA, TolQ and TolR, the periplasmic protein TolB and the outer membrane protein Pal. They form a network linking the inner and outer membranes and the peptidoglycan layer.

The protein resides in the periplasm. Functionally, part of the Tol-Pal system, which plays a role in outer membrane invagination during cell division and is important for maintaining outer membrane integrity. In Paraburkholderia phymatum (strain DSM 17167 / CIP 108236 / LMG 21445 / STM815) (Burkholderia phymatum), this protein is Tol-Pal system protein TolB.